The following is a 370-amino-acid chain: 4-hydroxy-3-methylbut-2-en-1-yl diphosphate synthase (flavodoxin) (370 aa).

The [4Fe-4S] cluster site is built by cysteine 265, cysteine 268, cysteine 300, and glutamate 307.

It belongs to the IspG family. [4Fe-4S] cluster is required as a cofactor.

It carries out the reaction (2E)-4-hydroxy-3-methylbut-2-enyl diphosphate + oxidized [flavodoxin] + H2O + 2 H(+) = 2-C-methyl-D-erythritol 2,4-cyclic diphosphate + reduced [flavodoxin]. The protein operates within isoprenoid biosynthesis; isopentenyl diphosphate biosynthesis via DXP pathway; isopentenyl diphosphate from 1-deoxy-D-xylulose 5-phosphate: step 5/6. Its function is as follows. Converts 2C-methyl-D-erythritol 2,4-cyclodiphosphate (ME-2,4cPP) into 1-hydroxy-2-methyl-2-(E)-butenyl 4-diphosphate. In Symbiobacterium thermophilum (strain DSM 24528 / JCM 14929 / IAM 14863 / T), this protein is 4-hydroxy-3-methylbut-2-en-1-yl diphosphate synthase (flavodoxin).